A 281-amino-acid polypeptide reads, in one-letter code: Release factor glutamine methyltransferase (281 aa).

S-adenosyl-L-methionine-binding positions include glycine 121–glycine 125, aspartate 144, and asparagine 188. Asparagine 188–tyrosine 191 contacts substrate.

Belongs to the protein N5-glutamine methyltransferase family. PrmC subfamily.

It carries out the reaction L-glutaminyl-[peptide chain release factor] + S-adenosyl-L-methionine = N(5)-methyl-L-glutaminyl-[peptide chain release factor] + S-adenosyl-L-homocysteine + H(+). Functionally, methylates the class 1 translation termination release factors RF1/PrfA and RF2/PrfB on the glutamine residue of the universally conserved GGQ motif. This chain is Release factor glutamine methyltransferase, found in Aquifex aeolicus (strain VF5).